We begin with the raw amino-acid sequence, 556 residues long: Formate--tetrahydrofolate ligase (556 aa).

Threonine 65 to serine 72 serves as a coordination point for ATP.

This sequence belongs to the formate--tetrahydrofolate ligase family.

The enzyme catalyses (6S)-5,6,7,8-tetrahydrofolate + formate + ATP = (6R)-10-formyltetrahydrofolate + ADP + phosphate. It participates in one-carbon metabolism; tetrahydrofolate interconversion. The sequence is that of Formate--tetrahydrofolate ligase from Clostridium perfringens (strain 13 / Type A).